Here is a 528-residue protein sequence, read N- to C-terminus: Glucosidase 2 subunit beta (528 aa).

The N-terminal stretch at 1–14 (MLLPLLLLLPMCWA) is a signal peptide. Residue serine 24 is modified to Phosphoserine; by FAM20C. LDL-receptor class A domains follow at residues 37 to 71 (FTCL…AACP) and 72 to 113 (NGSF…VICE). Intrachain disulfides connect cysteine 39-cysteine 58 and cysteine 56-cysteine 70. Residue aspartate 49 participates in substrate binding. 6 residues coordinate Ca(2+): glutamine 50, aspartate 53, tyrosine 55, aspartate 57, aspartate 63, and glutamate 64. Substrate is bound at residue aspartate 53. Asparagine 72 carries an N-linked (GlcNAc...) asparagine glycan. Cystine bridges form between cysteine 77–cysteine 99, cysteine 97–cysteine 112, and cysteine 100–cysteine 116. A Phosphoserine; by PKC modification is found at serine 89. Residues arginine 91, aspartate 94, valine 96, aspartate 98, aspartate 104, and glutamate 105 each coordinate Ca(2+). The residue at position 166 (lysine 166) is an N6-succinyllysine. Position 168 is a phosphoserine; by FAM20C (serine 168). 2 EF-hand domains span residues 209 to 244 (QEQE…DTDG) and 245 to 290 (DGAL…TDLP). 5 residues coordinate Ca(2+): aspartate 222, aspartate 224, aspartate 226, threonine 228, and glutamate 233. 2 disordered regions span residues 234 to 266 (LQTH…TDAT) and 281 to 357 (RSEA…DKMP). A compositionally biased stretch (low complexity) spans 247–258 (ALSEAEAQALLS). Over residues 312–337 (TEEEEEEEEEEEEEAEEEEEEEDSEE) the composition is skewed to acidic residues. The segment covering 338–348 (APPPLSPPQPA) has biased composition (pro residues). Residues serine 383 and serine 390 each carry the phosphoserine; by PKC modification. In terms of domain architecture, MRH spans 413–514 (SQCYELTTNE…ELMTPAACPE (102 aa)). A disulfide bond links cysteine 415 and cysteine 428. Serine 434 carries the post-translational modification Phosphoserine; by PKC. Cystine bridges form between cysteine 471/cysteine 500 and cysteine 485/cysteine 512. Residue asparagine 476 is glycosylated (N-linked (GlcNAc...) asparagine). Positions 525–528 (HDEL) match the Prevents secretion from ER motif.

As to quaternary structure, heterodimer of a catalytic alpha subunit (GANAB) and a beta subunit (PRKCSH). Binds glycosylated PTPRC.

The protein localises to the endoplasmic reticulum. It functions in the pathway glycan metabolism; N-glycan metabolism. In terms of biological role, regulatory subunit of glucosidase II that cleaves sequentially the 2 innermost alpha-1,3-linked glucose residues from the Glc(2)Man(9)GlcNAc(2) oligosaccharide precursor of immature glycoproteins. Required for efficient PKD1/Polycystin-1 biogenesis and trafficking to the plasma membrane of the primary cilia. The sequence is that of Glucosidase 2 subunit beta from Homo sapiens (Human).